We begin with the raw amino-acid sequence, 335 residues long: MNLLVTGAAGFIGSRYVHHLLEATRRGREPAPVITVLDKLTYAGVLGNVPDDPAVTFVRGDIADAPLVDSLMAEADQVVHFAAETHVDRSITSPGTFVRTNVLGTQVLLDAALRHGVGPFVHVSTDEVYGSIEHGSWPEHQPLCPNSPYSASKASSDLLALSYHRTHGLDVRVTRCSNNYGPHQFPEKIVPLFVTNLLDGLRVPLYGDGLNVREWLHVDDHCLGVDLVRTQGRPGEVYHIGGGTELTNRDLTGLLLDAFGVGWDVVDPVADRKGHDRRYALDCAKAADELGYRPRRDFAEGIARTIDWYRDNRAWWEPLKKRPAGPAAPPRGSGP.

NAD(+) contacts are provided by residues Phe11–Ile12, Asp38–Thr41, Asp61–Ile62, Phe81–Thr85, and Thr100. Thr85 contacts substrate. Substrate is bound at residue Thr125. Asp126 acts as the Proton donor in catalysis. Active-site proton acceptor residues include Glu127 and Tyr149. Tyr149–Lys153 lines the NAD(+) pocket. Asn178 is a binding site for substrate. Asn179 is an NAD(+) binding site. Residues Lys188–Ile189, Pro204–Tyr206, Arg213, Asn248, and Asp271–His275 contribute to the substrate site.

This sequence belongs to the NAD(P)-dependent epimerase/dehydratase family. dTDP-glucose dehydratase subfamily. NAD(+) is required as a cofactor.

It carries out the reaction dTDP-alpha-D-glucose = dTDP-4-dehydro-6-deoxy-alpha-D-glucose + H2O. The protein operates within antibiotic biosynthesis. Its function is as follows. Involved in the biosynthesis of the two 2,6-deoxysugars, dTDP-L-oleandrose and dTDP-D-desosamine, attached to the macrolactone ring oleandolide to produce the aglycone antibiotic oleandomycin. Catalyzes the dehydration of dTDP-D-glucose to form dTDP-6-deoxy-D-xylo-4-hexulose via a three-step process involving oxidation, dehydration and reduction. This chain is dTDP-glucose 4,6-dehydratase, found in Streptomyces antibioticus.